Here is a 155-residue protein sequence, read N- to C-terminus: Nucleosome assembly protein 1-like 5 (155 aa).

A compositionally biased stretch (basic and acidic residues) spans 1-16 (MADPEKQGPAESRAED). Residues 1–60 (MADPEKQGPAESRAEDEVMEGAQGGEDAATGDSATAPAAEEPQAPAENAPKPKNDFIESL) are disordered. A compositionally biased stretch (low complexity) spans 27 to 49 (DAATGDSATAPAAEEPQAPAENA). Residues 68–94 (VLALKKLQKRCDKIEAKFDKEFQALEK) adopt a coiled-coil conformation. A disordered region spans residues 119–155 (WTLEGEDDEDDEEEEDEEEEEEEAAAGATGGPDSAEK). A compositionally biased stretch (acidic residues) spans 122–142 (EGEDDEDDEEEEDEEEEEEEA).

This sequence belongs to the nucleosome assembly protein (NAP) family.

The protein localises to the nucleus. The sequence is that of Nucleosome assembly protein 1-like 5 (Nap1l5) from Rattus norvegicus (Rat).